Consider the following 480-residue polypeptide: Aspartyl/glutamyl-tRNA(Asn/Gln) amidotransferase subunit B (480 aa).

Belongs to the GatB/GatE family. GatB subfamily. Heterotrimer of A, B and C subunits.

It catalyses the reaction L-glutamyl-tRNA(Gln) + L-glutamine + ATP + H2O = L-glutaminyl-tRNA(Gln) + L-glutamate + ADP + phosphate + H(+). The enzyme catalyses L-aspartyl-tRNA(Asn) + L-glutamine + ATP + H2O = L-asparaginyl-tRNA(Asn) + L-glutamate + ADP + phosphate + 2 H(+). Its function is as follows. Allows the formation of correctly charged Asn-tRNA(Asn) or Gln-tRNA(Gln) through the transamidation of misacylated Asp-tRNA(Asn) or Glu-tRNA(Gln) in organisms which lack either or both of asparaginyl-tRNA or glutaminyl-tRNA synthetases. The reaction takes place in the presence of glutamine and ATP through an activated phospho-Asp-tRNA(Asn) or phospho-Glu-tRNA(Gln). This is Aspartyl/glutamyl-tRNA(Asn/Gln) amidotransferase subunit B from Streptococcus pneumoniae (strain 70585).